We begin with the raw amino-acid sequence, 387 residues long: Alpha-sarcoglycan (387 aa).

The first 24 residues, 1-24 (MAAAALLWLPLLVGCLAGPGGTEA), serve as a signal peptide directing secretion. At 25–290 (QQTTLYPLVG…ATARDFLADA (266 aa)) the chain is on the extracellular side. Asn-174 and Asn-246 each carry an N-linked (GlcNAc...) asparagine glycan. Residues 291–311 (LVTLLVPLLVALLLALLLAYI) traverse the membrane as a helical segment. Residues 312–387 (MCCRREGRLK…AQVPLILDQH (76 aa)) lie on the Cytoplasmic side of the membrane. Phosphoserine is present on Ser-377.

Belongs to the sarcoglycan alpha/epsilon family. Cross-link to form 2 major subcomplexes: one consisting of SGCB, SGCD and SGCG and the other consisting of SGCB and SGCD. The association between SGCB and SGCG is particularly strong while SGCA is loosely associated with the other sarcoglycans. Interacts with the syntrophin SNTA1.

It localises to the cell membrane. Its subcellular location is the sarcolemma. The protein resides in the cytoplasm. The protein localises to the cytoskeleton. Functionally, component of the sarcoglycan complex, a subcomplex of the dystrophin-glycoprotein complex which forms a link between the F-actin cytoskeleton and the extracellular matrix. The protein is Alpha-sarcoglycan (SGCA) of Oryctolagus cuniculus (Rabbit).